The sequence spans 69 residues: Small ribosomal subunit protein uS7 (69 aa).

This sequence belongs to the universal ribosomal protein uS7 family. Part of the 30S ribosomal subunit.

Functionally, one of the primary rRNA binding proteins, it binds directly to 16S rRNA where it nucleates assembly of the head domain of the 30S subunit. Is located at the subunit interface close to the decoding center. This Methanococcoides methylutens protein is Small ribosomal subunit protein uS7 (rps7).